Reading from the N-terminus, the 187-residue chain is Pre-mRNA-splicing factor cwf7 (187 aa).

This sequence belongs to the SPF27 family. In terms of assembly, belongs to the 40S cdc5-associated complex (or cwf complex), a spliceosome sub-complex reminiscent of a late-stage spliceosome composed of the U2, U5 and U6 snRNAs and at least brr2, cdc5, cwf2/prp3, cwf3/syf1, cwf4/syf3, cwf5/ecm2, spp42/cwf6, cwf7/spf27, cwf8, cwf9, cwf10, cwf11, cwf12, prp45/cwf13, cwf14, cwf15, cwf16, cwf17, cwf18, cwf19, cwf20, cwf21, cwf22, cwf23, cwf24, cwf25, cwf26, cyp7/cwf27, cwf28, cwf29/ist3, lea1, msl1, prp5/cwf1, prp10, prp12/sap130, prp17, prp22, sap61, sap62, sap114, sap145, slu7, smb1, smd1, smd3, smf1, smg1 and syf2.

It localises to the nucleus. In terms of biological role, involved in mRNA splicing. The chain is Pre-mRNA-splicing factor cwf7 (cwf7) from Schizosaccharomyces pombe (strain 972 / ATCC 24843) (Fission yeast).